Here is a 174-residue protein sequence, read N- to C-terminus: RNA pyrophosphohydrolase (174 aa).

Residues 6 to 149 (GFRANVGIII…KRDVYRKVMK (144 aa)) enclose the Nudix hydrolase domain. A Nudix box motif is present at residues 38–59 (GGVDEGESAEQAMYRELYEEVG).

Belongs to the Nudix hydrolase family. RppH subfamily. The cofactor is a divalent metal cation.

Its function is as follows. Accelerates the degradation of transcripts by removing pyrophosphate from the 5'-end of triphosphorylated RNA, leading to a more labile monophosphorylated state that can stimulate subsequent ribonuclease cleavage. The protein is RNA pyrophosphohydrolase of Shewanella loihica (strain ATCC BAA-1088 / PV-4).